The sequence spans 376 residues: MHCAQYTAGRCRSCQWLDKPYPQQLADKQHHLESLLAGHAVTQWLAPVFGRESTFRNKAKMVVSGSVERPLLGMLHRDGTPVDLCACPLYPPSFEPVFTVLKTFIARAGLTPYNVARKRGELKFLLLTESTYNGELMLRFVLRSETKLAQLIAALPWLQQQLPQLAVISANIQPVHMAILEGEREIPLTEQQALPERFNQVPLYIRPQSFFQTNPPVAASLYATARQWVQEHEVHSMWDLFCGVGGFGLHCAGPETQLTGIEISAEAIACARQSAEQLGLKNVSFAALDSTRFATAEAQIPELVLVNPPRRGIGRELCDYLSQMAPKFILYSSCNAETMAKDISLLAGYHIERVQLFDMFPHTSHYEVLTLLALRR.

[4Fe-4S] cluster contacts are provided by Cys-3, Cys-11, Cys-14, and Cys-87. Gln-212, Phe-241, Glu-262, and Asn-307 together coordinate S-adenosyl-L-methionine. Cys-334 functions as the Nucleophile in the catalytic mechanism.

This sequence belongs to the class I-like SAM-binding methyltransferase superfamily. RNA M5U methyltransferase family. RlmC subfamily.

The catalysed reaction is uridine(747) in 23S rRNA + S-adenosyl-L-methionine = 5-methyluridine(747) in 23S rRNA + S-adenosyl-L-homocysteine + H(+). In terms of biological role, catalyzes the formation of 5-methyl-uridine at position 747 (m5U747) in 23S rRNA. The protein is 23S rRNA (uracil(747)-C(5))-methyltransferase RlmC of Yersinia pseudotuberculosis serotype I (strain IP32953).